Here is a 30-residue protein sequence, read N- to C-terminus: MITDSQIFFALCIALTAAVLAIGLGRQLYV.

Residues 5–25 (SQIFFALCIALTAAVLAIGLG) traverse the membrane as a helical segment.

Belongs to the PsaM family.

The protein localises to the plastid. Its subcellular location is the chloroplast thylakoid membrane. The polypeptide is Photosystem I reaction center subunit XII (Emiliania huxleyi (Coccolithophore)).